The primary structure comprises 304 residues: Polyisoprenyl-teichoic acid--peptidoglycan teichoic acid transferase TagU (304 aa).

Over 1 to 3 (MKK) the chain is Cytoplasmic. A helical; Signal-anchor for type II membrane protein membrane pass occupies residues 4–24 (ALIAIGLILGTITVAIIGYGI). Over 25-304 (YLYSSIQNTA…GELKSHLELS (280 aa)) the chain is Extracellular.

The protein belongs to the LytR/CpsA/Psr (LCP) family.

Its subcellular location is the cell membrane. It participates in cell wall biogenesis. May catalyze the final step in cell wall teichoic acid biosynthesis, the transfer of the anionic cell wall polymers (APs) from their lipid-linked precursor to the cell wall peptidoglycan (PG). In Halalkalibacterium halodurans (strain ATCC BAA-125 / DSM 18197 / FERM 7344 / JCM 9153 / C-125) (Bacillus halodurans), this protein is Polyisoprenyl-teichoic acid--peptidoglycan teichoic acid transferase TagU.